A 295-amino-acid chain; its full sequence is Probable adenylate kinase 6, chloroplastic (295 aa).

Residues 1–46 (MAVSHRLLRPATTTIKNTFSSLFIRSLSSSSSGSSLDPKIDLEEAA) constitute a chloroplast transit peptide. 74–79 (GVGKGT) provides a ligand contact to ATP. The segment at 94-123 (ATGDLVREELSSSGLLSSQLKELVNHGKLV) is NMP. AMP-binding positions include Thr95, Arg100, 121–123 (KLV), 151–154 (GFPR), and Gln158. Residues 187-235 (GRRICSECGGNYNVACIDIKGDDDTPRMYMPPLLPPPNCESKLISRADD) are LID. Residue Arg188 coordinates ATP. Arg243 is a binding site for AMP. Gly271 lines the ATP pocket.

Belongs to the adenylate kinase family. Monomer.

It is found in the plastid. It localises to the chloroplast. It carries out the reaction AMP + ATP = 2 ADP. In terms of biological role, catalyzes the reversible transfer of the terminal phosphate group between ATP and AMP. Plays an important role in cellular energy homeostasis and in adenine nucleotide metabolism. The protein is Probable adenylate kinase 6, chloroplastic of Arabidopsis thaliana (Mouse-ear cress).